The primary structure comprises 341 residues: Ferrochelatase (341 aa).

Fe cation-binding residues include His-189 and Glu-293.

It belongs to the ferrochelatase family.

It localises to the cytoplasm. It catalyses the reaction heme b + 2 H(+) = protoporphyrin IX + Fe(2+). Its pathway is porphyrin-containing compound metabolism; protoheme biosynthesis; protoheme from protoporphyrin-IX: step 1/1. In terms of biological role, catalyzes the ferrous insertion into protoporphyrin IX. The polypeptide is Ferrochelatase (Stutzerimonas stutzeri (strain A1501) (Pseudomonas stutzeri)).